A 455-amino-acid polypeptide reads, in one-letter code: Kynurenine 3-monooxygenase (455 aa).

It belongs to the aromatic-ring hydroxylase family. KMO subfamily. FAD serves as cofactor.

The catalysed reaction is L-kynurenine + NADPH + O2 + H(+) = 3-hydroxy-L-kynurenine + NADP(+) + H2O. It participates in cofactor biosynthesis; NAD(+) biosynthesis; quinolinate from L-kynurenine: step 1/3. In terms of biological role, catalyzes the hydroxylation of L-kynurenine (L-Kyn) to form 3-hydroxy-L-kynurenine (L-3OHKyn). Required for synthesis of quinolinic acid. The sequence is that of Kynurenine 3-monooxygenase from Xanthomonas oryzae pv. oryzae (strain KACC10331 / KXO85).